A 74-amino-acid polypeptide reads, in one-letter code: Large ribosomal subunit protein uL29 (74 aa).

This sequence belongs to the universal ribosomal protein uL29 family.

This Nostoc sp. (strain PCC 7120 / SAG 25.82 / UTEX 2576) protein is Large ribosomal subunit protein uL29.